A 79-amino-acid polypeptide reads, in one-letter code: Small ribosomal subunit protein uS17 (79 aa).

The protein belongs to the universal ribosomal protein uS17 family. As to quaternary structure, part of the 30S ribosomal subunit.

One of the primary rRNA binding proteins, it binds specifically to the 5'-end of 16S ribosomal RNA. The sequence is that of Small ribosomal subunit protein uS17 from Roseobacter denitrificans (strain ATCC 33942 / OCh 114) (Erythrobacter sp. (strain OCh 114)).